Reading from the N-terminus, the 1135-residue chain is Topless-related protein 4 (1135 aa).

Residues leucine 4–phenylalanine 36 form the LisH domain. Positions phenylalanine 34–lysine 92 constitute a CTLH domain. The residue at position 214 (serine 214) is a Phosphoserine. The tract at residues leucine 281 to serine 303 is disordered. Positions proline 290–serine 303 are enriched in polar residues. 12 WD repeats span residues serine 355–serine 395, glutamate 417–asparagine 456, alanine 462–threonine 503, glycine 506–aspartate 547, alanine 550–threonine 593, leucine 597–serine 636, alanine 638–histidine 680, leucine 776–leucine 815, asparagine 843–threonine 881, alanine 884–lysine 924, glycine 927–serine 966, and glutamate 1020–arginine 1059. Residues aspartate 1095–arginine 1135 are disordered. Residues glycine 1119–arginine 1135 show a composition bias toward low complexity.

Tetramer. Interacts with WUS (via the C-terminal domain). Interacts with SPL (via EAR motif). Interacts with SPEAR3/TIE1. Binds to and corepresses GAF1/IDD2 at the promoter of GA20OX2 gene.

The protein localises to the nucleus. Functionally, transcription corepressor of Zinc finger transcription factors GAF1/IDD2 and ENY/IDD1 in regulation of gibberellin homeostasis and signaling. In Arabidopsis thaliana (Mouse-ear cress), this protein is Topless-related protein 4 (TPR4).